The sequence spans 146 residues: Large ribosomal subunit protein uL15 (146 aa).

The segment at 1–56 is disordered; the sequence is MGLRLNELSPGVGAKKTAQRRGRGIGSGLGKTGGRGVKGQKSRSGSSVRSGFEGGQ. Over residues 24 to 37 the composition is skewed to gly residues; it reads GIGSGLGKTGGRGV.

This sequence belongs to the universal ribosomal protein uL15 family. As to quaternary structure, part of the 50S ribosomal subunit.

Its function is as follows. Binds to the 23S rRNA. This Psychrobacter arcticus (strain DSM 17307 / VKM B-2377 / 273-4) protein is Large ribosomal subunit protein uL15.